The following is a 147-amino-acid chain: Hemoglobin subunit beta (147 aa).

An N-acetylvaline modification is found at valine 2. One can recognise a Globin domain in the interval 3–147; it reads HLTGEEKSAV…VANALAHKYH (145 aa). Position 13 is a phosphothreonine (threonine 13). Serine 45 carries the post-translational modification Phosphoserine. Position 60 is an N6-acetyllysine (lysine 60). Heme b is bound at residue histidine 64. N6-acetyllysine is present on lysine 83. A heme b-binding site is contributed by histidine 93. Cysteine 94 carries the S-nitrosocysteine modification. Lysine 145 carries the post-translational modification N6-acetyllysine.

Belongs to the globin family. In terms of assembly, heterotetramer of two alpha chains and two beta chains. As to expression, red blood cells.

Its function is as follows. Involved in oxygen transport from the lung to the various peripheral tissues. This Callithrix jacchus (White-tufted-ear marmoset) protein is Hemoglobin subunit beta (HBB).